The following is a 217-amino-acid chain: DNA-binding transcriptional activator DevR/DosR (217 aa).

The Response regulatory domain occupies 3–119 (KVFLVDDHEV…ELARAVKDVG (117 aa)). 4-aspartylphosphate is present on aspartate 54. Residues 143–208 (KQDPLSGLTD…QAAVFATELK (66 aa)) enclose the HTH luxR-type domain. A DNA-binding region (H-T-H motif) is located at residues 167–186 (NKQIADRMFLAEKTVKNYVS). Phosphothreonine; by PknH is present on residues threonine 198 and threonine 205.

As to quaternary structure, homodimer. Interacts with NarL. Phosphorylated on Asp-54 by both DevS (DosS) and DosT. Phosphorylated on Thr-198 and Thr-205 by PknH, which enhances DevR dimerization. Aspartate phosphorylation and threonine phosphorylation cooperatively enhance DevR binding to DNA.

It localises to the cytoplasm. The protein localises to the host cytoplasmic vesicle. It is found in the host phagosome. Functionally, member of the two-component regulatory system DevR/DevS (also called DosR/DosS) involved in onset of the dormancy response. Regulates an approximately 48-member regulon. When phosphorylated binds and activates the promoter of DevR regulon genes in response to hypoxia. The presence of target DNA increases stability of phospho-DevR in vitro. Activates its own transcription under hypoxic but not aerobic conditions, probably binds as a dimer to tandem binding sites within the devR and hspX promoters. Accepts a phosphate group from DevS (DosS) and from DosT. Does not regulate transcription of dosT. The chain is DNA-binding transcriptional activator DevR/DosR from Mycobacterium tuberculosis (strain ATCC 25618 / H37Rv).